The chain runs to 148 residues: [Ribosomal protein bS18]-alanine N-acetyltransferase (148 aa).

One can recognise an N-acetyltransferase domain in the interval 2–147; the sequence is NTISSLETTD…DAIIMALPIS (146 aa). 69 to 71 serves as a coordination point for acetyl-CoA; sequence IAV. The active-site Proton acceptor is the glutamate 103. Asparagine 108 contributes to the acetyl-CoA binding site. Tyrosine 115 serves as the catalytic Proton donor.

The protein belongs to the acetyltransferase family. RimI subfamily.

It is found in the cytoplasm. It carries out the reaction N-terminal L-alanyl-[ribosomal protein bS18] + acetyl-CoA = N-terminal N(alpha)-acetyl-L-alanyl-[ribosomal protein bS18] + CoA + H(+). Acetylates the N-terminal alanine of ribosomal protein bS18. The protein is [Ribosomal protein bS18]-alanine N-acetyltransferase of Escherichia coli O157:H7.